The chain runs to 360 residues: Ferredoxin--NADP reductase, leaf isozyme, chloroplastic (360 aa).

Residues 1-52 (MAAAVTAAVSLPYSNSTSLPIRTSIVAPERLVFKKVSLNNVSISGRVGTIRA) constitute a chloroplast transit peptide. Residues 81-203 (KEPYVGRCLL…TGPVGKEMLM (123 aa)) enclose the FAD-binding FR-type domain. FAD contacts are provided by residues 139-142 (RLYS), 160-162 (CVK), Y166, 177-179 (VCS), and T218. 2 residues coordinate NADP(+): S142 and K162. Residues T218, 250 to 251 (VP), 280 to 281 (SR), K290, 319 to 320 (GL), and E358 contribute to the NADP(+) site.

This sequence belongs to the ferredoxin--NADP reductase type 1 family. In terms of assembly, monomer. Interacts with TIC62 (via C-terminus). The cofactor is FAD.

Its subcellular location is the plastid. The protein resides in the chloroplast stroma. It localises to the chloroplast thylakoid membrane. It catalyses the reaction 2 reduced [2Fe-2S]-[ferredoxin] + NADP(+) + H(+) = 2 oxidized [2Fe-2S]-[ferredoxin] + NADPH. The protein operates within energy metabolism; photosynthesis. In terms of biological role, may play a key role in regulating the relative amounts of cyclic and non-cyclic electron flow to meet the demands of the plant for ATP and reducing power. This is Ferredoxin--NADP reductase, leaf isozyme, chloroplastic (PETH) from Pisum sativum (Garden pea).